A 250-amino-acid polypeptide reads, in one-letter code: Pyrroloquinoline-quinone synthase (250 aa).

Belongs to the PqqC family.

It catalyses the reaction 6-(2-amino-2-carboxyethyl)-7,8-dioxo-1,2,3,4,7,8-hexahydroquinoline-2,4-dicarboxylate + 3 O2 = pyrroloquinoline quinone + 2 H2O2 + 2 H2O + H(+). It participates in cofactor biosynthesis; pyrroloquinoline quinone biosynthesis. Ring cyclization and eight-electron oxidation of 3a-(2-amino-2-carboxyethyl)-4,5-dioxo-4,5,6,7,8,9-hexahydroquinoline-7,9-dicarboxylic-acid to PQQ. The protein is Pyrroloquinoline-quinone synthase of Xanthomonas campestris pv. campestris (strain 8004).